Reading from the N-terminus, the 262-residue chain is Indole-3-glycerol phosphate synthase (262 aa).

The protein belongs to the TrpC family.

It carries out the reaction 1-(2-carboxyphenylamino)-1-deoxy-D-ribulose 5-phosphate + H(+) = (1S,2R)-1-C-(indol-3-yl)glycerol 3-phosphate + CO2 + H2O. The protein operates within amino-acid biosynthesis; L-tryptophan biosynthesis; L-tryptophan from chorismate: step 4/5. The chain is Indole-3-glycerol phosphate synthase from Bordetella petrii (strain ATCC BAA-461 / DSM 12804 / CCUG 43448).